A 356-amino-acid polypeptide reads, in one-letter code: UDP-3-O-acylglucosamine N-acyltransferase (356 aa).

Histidine 242 functions as the Proton acceptor in the catalytic mechanism.

This sequence belongs to the transferase hexapeptide repeat family. LpxD subfamily. In terms of assembly, homotrimer.

The catalysed reaction is a UDP-3-O-[(3R)-3-hydroxyacyl]-alpha-D-glucosamine + a (3R)-hydroxyacyl-[ACP] = a UDP-2-N,3-O-bis[(3R)-3-hydroxyacyl]-alpha-D-glucosamine + holo-[ACP] + H(+). It participates in bacterial outer membrane biogenesis; LPS lipid A biosynthesis. Functionally, catalyzes the N-acylation of UDP-3-O-acylglucosamine using 3-hydroxyacyl-ACP as the acyl donor. Is involved in the biosynthesis of lipid A, a phosphorylated glycolipid that anchors the lipopolysaccharide to the outer membrane of the cell. The chain is UDP-3-O-acylglucosamine N-acyltransferase from Acinetobacter baumannii (strain AB307-0294).